Consider the following 566-residue polypeptide: MANSEADKLFKEFKIQSVSEFFRRNAAMLGYTGKLRSLTTLIHEAVTNSLDACEEAGILPYVRVEIEELGTEHYKIIVEDNGPGIPEKFIAHVFGKMLAGTKAHRNIQSRGQQGIGISGAVMFAQITSGKATRIITSTGEEEIIEAWVGIDVDKNEGKIFKKIKHPNPTGWRGTRIEMEVKDVRYIRSKQGVYWYLKLTAIANPHAHIEFIEPDGKLIVFSRSSEELPEPPEEMKPHPKGIITDDIYRMAQRTTRTTVRTFLIGEFSRISDKKIDELVQYITALRLIKEEEEQNVKEQLMKRLVDGEVDKIIASFGKRGKKVLREVRKIMEKPPKKLTWHEAEEIVEAFKYMTFLAPPTHGLRPIGEENIEKGLTGILRPEFVTSVTRPPKVYRGGIPFQVEVGLAFGGELSSGFDLLRYANRVPLLFDAGSCVITSAARNIDWKRYRVDDVDRAPLALLVNVVSVHVPYTSTGKQSVANEEEIYEEIRLAVMDVARRLAKYLGGKHRKLYQVKRRKTLEKYVPEVSRALSILTGLPEGEIKKMLVTIIEKKFESIDEAVEAESDA.

Residues Asn-48, Asp-80, 101–102, 111–118, and Lys-475 each bind ATP; these read TK and GQQGIGIS.

It belongs to the TOP6B family. In terms of assembly, homodimer. Heterotetramer of two Top6A and two Top6B chains.

The catalysed reaction is ATP-dependent breakage, passage and rejoining of double-stranded DNA.. Functionally, relaxes both positive and negative superturns and exhibits a strong decatenase activity. In Thermococcus sibiricus (strain DSM 12597 / MM 739), this protein is Type 2 DNA topoisomerase 6 subunit B.